Here is a 458-residue protein sequence, read N- to C-terminus: Oxysterol-binding protein-related protein 3B (458 aa).

3 disordered regions span residues 47-66 (VINP…RGRW), 370-401 (DMSK…AFTP), and 431-458 (RAAA…DLST). A compositionally biased stretch (basic and acidic residues) spans 375-396 (GYEKSSMEERQRAEKRTREEKG). A compositionally biased stretch (polar residues) spans 443-458 (PKSIQFNPWQFQDLST).

Belongs to the OSBP family. In terms of tissue distribution, expressed in roots, leaves, stems and flowers.

Its function is as follows. May be involved in the transport of sterols. The chain is Oxysterol-binding protein-related protein 3B (ORP3B) from Arabidopsis thaliana (Mouse-ear cress).